The sequence spans 464 residues: GDNF family receptor alpha-2 (464 aa).

A signal peptide spans 1 to 21 (MILANAFCLFFFLDETLRSLA). 14 disulfide bridges follow: Cys-40/Cys-93, Cys-47/Cys-53, Cys-63/Cys-78, Cys-95/Cys-105, Cys-161/Cys-222, Cys-168/Cys-174, Cys-185/Cys-200, Cys-195/Cys-241, Cys-224/Cys-229, Cys-251/Cys-323, Cys-258/Cys-264, Cys-275/Cys-293, Cys-285/Cys-347, and Cys-325/Cys-335. N-linked (GlcNAc...) asparagine glycosylation occurs at Asn-52. A glycan (N-linked (GlcNAc...) asparagine) is linked at Asn-357. A disordered region spans residues 363–392 (MSPKGPTFSATQAPRVEKTPSLPDDLSDST). The span at 381 to 392 (TPSLPDDLSDST) shows a compositional bias: low complexity. An N-linked (GlcNAc...) asparagine glycan is attached at Asn-413. Ser-443 carries the GPI-anchor amidated serine lipid modification. Residues 444-464 (CRARLSTALTALPLLMVTLAQ) constitute a propeptide, removed in mature form.

The protein belongs to the GDNFR family. As to quaternary structure, interacts with NRTN ligand and RET: forms a 2:2:2 ternary complex composed of NRTN ligand, GFRA2 and RET receptor. Also forms a 4:4:4 tetrameric complex composed of 4 copies of NRTN ligand, GFRA2 and RET receptor, which prevents endocytosis of RET. Interacts with SORL1. In terms of tissue distribution, neurons of the superior cervical and dorsal root ganglia, and adult brain and testis. Low level in the substantia nigra, spleen and adrenal gland. Isoform 1, isoform 2 and isoform 3 are all expressed in brain, liver, ileum, spleen, heart and kidney. In brain, isoform 1 is most abundant, isoform 2 slightly less and isoform 3 is lowest. No significant levels of isoform 1, isoform 2 or isoform 3 expression in testis.

Its subcellular location is the cell membrane. Receptor for neurturin (NRTN), a growth factor that supports the survival of sympathetic neurons. NRTN-binding leads to autophosphorylation and activation of the RET receptor. Also able to mediate GDNF signaling through the RET tyrosine kinase receptor. Functionally, participates in NRTN-induced 'Ser-727' phosphorylation of STAT3. The polypeptide is GDNF family receptor alpha-2 (Mus musculus (Mouse)).